We begin with the raw amino-acid sequence, 859 residues long: Leucine--tRNA ligase (859 aa).

The short motif at 42–52 (PYPSGKLHVGH) is the 'HIGH' region element. Residues 611 to 615 (KMSKS) carry the 'KMSKS' region motif. ATP is bound at residue Lys-614.

The protein belongs to the class-I aminoacyl-tRNA synthetase family.

Its subcellular location is the cytoplasm. It carries out the reaction tRNA(Leu) + L-leucine + ATP = L-leucyl-tRNA(Leu) + AMP + diphosphate. This chain is Leucine--tRNA ligase, found in Fusobacterium nucleatum subsp. nucleatum (strain ATCC 25586 / DSM 15643 / BCRC 10681 / CIP 101130 / JCM 8532 / KCTC 2640 / LMG 13131 / VPI 4355).